The sequence spans 93 residues: UPF0358 protein YlaN (93 aa).

The protein belongs to the UPF0358 family.

Essential for cell growth and for normal cell shape. This chain is UPF0358 protein YlaN (ylaN), found in Bacillus subtilis (strain 168).